The sequence spans 1280 residues: Fibronectin type III domain-containing protein (1280 aa).

Positions 1-19 are cleaved as a signal peptide; sequence MWQILLAISIFSLSKLSNA. Residues 20–1156 lie on the Extracellular side of the membrane; it reads QQQPKVAPPQ…RVSTPIYQSA (1137 aa). 5 disulfides stabilise this stretch: C58-C111, C268-C321, C369-C417, C460-C511, and C553-C604. 5 consecutive Fibronectin type-III domains span residues 628–722, 730–824, 830–933, 939–1033, and 1039–1131; these read PFPP…TGSF, PEKW…VKQF, PTGK…VAAD, PGPP…TEKT, and PAKP…PASD. The segment covering 1118-1130 has biased composition (polar residues); the sequence is YPSQENPQESPAS. The segment at 1118 to 1144 is disordered; that stretch reads YPSQENPQESPASDITEARPRPGISNV. A helical membrane pass occupies residues 1157-1177; sequence WFIALLVLIALLLLVLLTFVL. The Cytoplasmic segment spans residues 1178-1280; sequence YTRHQGAKYL…KDPSSLATFV (103 aa). The interval 1206 to 1280 is disordered; the sequence is DEEEGSFSNN…KDPSSLATFV (75 aa). Positions 1262–1273 are enriched in basic and acidic residues; it reads DEKKAPPEEKDP.

Component of the acid-insoluble organic matrix of the aragonitic skeleton (at protein level).

It is found in the membrane. The polypeptide is Fibronectin type III domain-containing protein (Acropora millepora (Staghorn coral)).